A 354-amino-acid polypeptide reads, in one-letter code: Magnesium-chelatase subunit ChlI (354 aa).

47-54 (GDRGTGKS) lines the ATP pocket. An intrachain disulfide couples Cys-282 to Cys-324.

This sequence belongs to the Mg-chelatase subunits D/I family. In terms of assembly, the magnesium chelatase complex is a heterotrimer consisting of subunits CHLI, CHLD and CHLH.

It localises to the plastid. The protein resides in the chloroplast. It catalyses the reaction protoporphyrin IX + Mg(2+) + ATP + H2O = Mg-protoporphyrin IX + ADP + phosphate + 3 H(+). It participates in porphyrin-containing compound metabolism; chlorophyll biosynthesis. Redox regulation; active in reducing conditions, inactive in oxidizing conditions. Thioredoxins f and m mediate the reversible reductive activation of oxidized CHLI. In terms of biological role, involved in chlorophyll biosynthesis. Catalyzes the insertion of magnesium ion into protoporphyrin IX to yield Mg-protoporphyrin IX. The magnesium-chelatase is a complex of three subunits, CHLI, CHLD and CHLH. The reaction takes place in two steps, with an ATP-dependent activation followed by an ATP-dependent chelation step. This is Magnesium-chelatase subunit ChlI (chlI) from Chlorella vulgaris (Green alga).